The following is a 286-amino-acid chain: Probable ketoamine kinase YniA (286 aa).

91-93 (DYL) is an ATP binding site. Asp-193 (proton acceptor) is an active-site residue.

This sequence belongs to the fructosamine kinase family.

Functionally, ketoamine kinase that phosphorylates ketoamines on the third carbon of the sugar moiety to generate ketoamine 3-phosphate. Its precise substrate are unknown: does not have ribulosamine and/or erythrulosamine 3-kinase activity in vitro. The protein is Probable ketoamine kinase YniA (yniA) of Escherichia coli (strain K12).